The primary structure comprises 102 residues: Putative ribosomal protein uL13-like (102 aa).

It belongs to the universal ribosomal protein uL13 family.

In Homo sapiens (Human), this protein is Putative ribosomal protein uL13-like (RPL13AP3).